We begin with the raw amino-acid sequence, 231 residues long: Orotidine 5'-phosphate decarboxylase (231 aa).

Residues Asp11, Lys32, 59–68, Thr118, Arg180, Gln189, Gly209, and Arg210 each bind substrate; that span reads DLKFHDIPNT. Lys61 functions as the Proton donor in the catalytic mechanism.

This sequence belongs to the OMP decarboxylase family. Type 1 subfamily. Homodimer.

The enzyme catalyses orotidine 5'-phosphate + H(+) = UMP + CO2. It participates in pyrimidine metabolism; UMP biosynthesis via de novo pathway; UMP from orotate: step 2/2. In terms of biological role, catalyzes the decarboxylation of orotidine 5'-monophosphate (OMP) to uridine 5'-monophosphate (UMP). The protein is Orotidine 5'-phosphate decarboxylase of Synechocystis sp. (strain ATCC 27184 / PCC 6803 / Kazusa).